The primary structure comprises 415 residues: Fructose-like permease IIC component (415 aa).

Residues 1–46 (MAIKKRSATVVPGASGAAAAVKNPQASKSSFWGELPQHVMSGISRM) are Cytoplasmic-facing. A PTS EIIC type-2 domain is found at 35–410 (LPQHVMSGIS…RLMMFRKGKL (376 aa)). The chain crosses the membrane as a helical span at residues 47 to 67 (VPTLIMGGVILAFSQLIAYSW). Topologically, residues 68–101 (LKIPAEIGIMDALNSGKFSGFDLSLLKFAWLSQS) are periplasmic. The helical transmembrane segment at 102–122 (FGGVLFGFAIPMFAAFVANSI) threads the bilayer. Residues 123 to 126 (GGKL) lie on the Cytoplasmic side of the membrane. Residues 127 to 147 (AFPAGFIGGLMSTQPTQLLNF) form a helical membrane-spanning segment. The Periplasmic segment spans residues 148 to 157 (DPSTMQWATS). The chain crosses the membrane as a helical span at residues 158–178 (SPVPSTFIGALIISIVAGYLV). The Cytoplasmic portion of the chain corresponds to 179–197 (KWMNQKIQLPDFLLAFKTT). Residues 198-218 (FLLPILSAIFVMLAMYYVITP) form a helical membrane-spanning segment. Residues 219-237 (FGGWINGGIRTVLTAAGEK) are Periplasmic-facing. Residues 238–258 (GALMYAMGIAAATAIDLGGPI) traverse the membrane as a helical segment. Over 259-276 (NKAAGFVAFSFTTDHVLP) the chain is Cytoplasmic. A helical transmembrane segment spans residues 277-297 (VTARSIAIVIPPIGLGLATII). Over 298-318 (DRRLTGKRLFNAQLYPQGKTA) the chain is Periplasmic. The chain crosses the membrane as a helical span at residues 319–339 (MFLAFMGISEGAIPFALESPI). The Cytoplasmic portion of the chain corresponds to 340 to 341 (TA). Residues 342 to 362 (IPSYMVGAIVGSTAAVWLGAV) traverse the membrane as a helical segment. The Periplasmic segment spans residues 363–378 (QWFPESAIWAWPLVTN). The helical transmembrane segment at 379 to 399 (LGVYMAGIALGAVITALMVVF) threads the bilayer. Residues 400-415 (LRLMMFRKGKLLIDSL) lie on the Cytoplasmic side of the membrane.

Its subcellular location is the cell inner membrane. The phosphoenolpyruvate-dependent sugar phosphotransferase system (PTS), a major carbohydrate active -transport system, catalyzes the phosphorylation of incoming sugar substrates concomitant with their translocation across the cell membrane. This chain is Fructose-like permease IIC component (fryC), found in Escherichia coli O157:H7.